Here is a 793-residue protein sequence, read N- to C-terminus: E3 UFM1-protein ligase 1 (793 aa).

N-acetylalanine is present on alanine 2. The segment at alanine 2–proline 200 is mediates interaction with DDRGK1. The tract at residues alanine 2 to phenylalanine 212 is required for E3 UFM1-protein ligase activity. The involved in CDK5RAP3-binding stretch occupies residues aspartate 121–serine 250. Residues proline 200–aspartate 400 are mediates interaction with TRIP4. The disordered stretch occupies residues valine 410–aspartate 473. Arginine 433 carries the post-translational modification Omega-N-methylarginine. Serine 458 and serine 462 each carry phosphoserine. Positions isoleucine 490–leucine 683 are mediates interaction with CDK5RAP3. Phosphothreonine is present on threonine 535. The segment at asparagine 742–lysine 769 is disordered. 2 positions are modified to phosphoserine: serine 752 and serine 753. Basic and acidic residues predominate over residues lysine 758–lysine 769.

This sequence belongs to the UFL1 family. Catalytic component of the UFM1 ribosome E3 ligase (UREL) complex, composed of UFL1, DDRGK1 and CDK5RAP3. Interacts with E2-like enzyme UFC1. Interacts with RELA. Interacts with NBN; promoting recruitment to double-strand breaks following DNA damage. Interacts (when phosphorylated) with YWHAG/14-3-3-gamma; sequestering UFL1 and preventing its association with PDCD1/PD-1 substrate. Ubiquitinated, leading to its degradation by the proteasome. Interaction with CDK5RAP3 protects both proteins against ubiquitination and degradation via the proteasome. In terms of processing, phosphorylated at Ser-462 by ATM, enhancing protein ligase activity and promoting ATM activation in a positive feedback loop. Phosphorylation at Thr-535 by AMPK promotes its interaction with YWHAG/14-3-3-gamma, thereby preventing UFL1 association with PDCD1/PD-1 substrate. As to expression, ubiquitously expressed with expression detected in brain, skeletal muscle, lung, heart, gall bladder, liver, small intestine, pancreas, spleen and kidney (at protein level). At 8 weeks after birth, high expression in the Purkinje cell layer of the cerebellum.

The protein resides in the endoplasmic reticulum membrane. Its subcellular location is the cytoplasm. The protein localises to the cytosol. It is found in the nucleus. It localises to the chromosome. In terms of biological role, E3 protein ligase that mediates ufmylation, the covalent attachment of the ubiquitin-like modifier UFM1 to lysine residues on target proteins, and which plays a key role in various processes, such as ribosome recycling, response to DNA damage, interferon response or reticulophagy (also called ER-phagy). Catalyzes ufmylation of many protein, such as CD274/PD-L1, CDK5RAP3, CYB5R3, DDRGK1, EIF6, histone H4, MRE11, P4HB, PDCD1/PD-1, TRIP4, RPN1, RPS20/uS10, RPL10/uL16, RPL26/uL24, SYVN1/HRD1 and TP53/p53. As part of the UREL complex, plays a key role in ribosome recycling by catalyzing mono-ufmylation of RPL26/uL24 subunit of the 60S ribosome. Ufmylation of RPL26/uL24 occurs on free 60S ribosomes following ribosome dissociation: it weakens the junction between post-termination 60S subunits and SEC61 translocons, promoting release and recycling of the large ribosomal subunit from the endoplasmic reticulum membrane. Ufmylation of RPL26/uL24 and subsequent 60S ribosome recycling either take place after normal termination of translation or after ribosome stalling during cotranslational translocation at the endoplasmic reticulum. Involved in reticulophagy in response to endoplasmic reticulum stress by mediating ufmylation of proteins such as CYB5R3 and RPN1, thereby promoting lysosomal degradation of ufmylated proteins. Ufmylation in response to endoplasmic reticulum stress is essential for processes such as hematopoiesis, blood vessel morphogenesis or inflammatory response. Mediates ufmylation of DDRGK1 and CDK5RAP3; the role of these modifications is however unclear: as both DDRGK1 and CDK5RAP3 act as substrate adapters for ufmylation, it is uncertain whether ufmylation of these proteins is, a collateral effect or is required for ufmylation. Acts as a negative regulator of T-cell activation by mediating ufmylation and stabilization of PDCD1/PD-1. Also involved in the response to DNA damage: recruited to double-strand break sites following DNA damage and mediates monoufmylation of histone H4 and ufmylation of MRE11. Mediates ufmylation of TP53/p53, promoting its stability. Catalyzes ufmylation of TRIP4, thereby playing a role in nuclear receptor-mediated transcription. Required for hematopoietic stem cell function and hematopoiesis. In Rattus norvegicus (Rat), this protein is E3 UFM1-protein ligase 1.